The sequence spans 227 residues: MAYPFQLGFQDASSPIMEELLHFHDHTLMIVFLISSLVLYIISLMLTTKLTHTSTMDAQEVETIWTILPAIILILIALPSLRILYMMDEINNPSLTVKTMGHQWYWSYEYTDYEDLNFDSYMIPTSDLNPGDLRLLEVDNRVVLPMELPIRMLISSEDVLHSWAVPSLGLKTDAIPGRLNQATLISTRPGLFYGQCSEICGSNHSFMPIVLEMVPLKHFENWSLSMI.

The Mitochondrial intermembrane segment spans residues 1–14 (MAYPFQLGFQDASS). A helical transmembrane segment spans residues 15 to 45 (PIMEELLHFHDHTLMIVFLISSLVLYIISLM). Residues 46–59 (LTTKLTHTSTMDAQ) lie on the Mitochondrial matrix side of the membrane. The helical transmembrane segment at 60-87 (EVETIWTILPAIILILIALPSLRILYMM) threads the bilayer. The Mitochondrial intermembrane portion of the chain corresponds to 88–227 (DEINNPSLTV…HFENWSLSMI (140 aa)). 6 residues coordinate Cu cation: His161, Cys196, Glu198, Cys200, His204, and Met207. Mg(2+) is bound at residue Glu198.

It belongs to the cytochrome c oxidase subunit 2 family. In terms of assembly, component of the cytochrome c oxidase (complex IV, CIV), a multisubunit enzyme composed of 14 subunits. The complex is composed of a catalytic core of 3 subunits MT-CO1, MT-CO2 and MT-CO3, encoded in the mitochondrial DNA, and 11 supernumerary subunits COX4I, COX5A, COX5B, COX6A, COX6B, COX6C, COX7A, COX7B, COX7C, COX8 and NDUFA4, which are encoded in the nuclear genome. The complex exists as a monomer or a dimer and forms supercomplexes (SCs) in the inner mitochondrial membrane with NADH-ubiquinone oxidoreductase (complex I, CI) and ubiquinol-cytochrome c oxidoreductase (cytochrome b-c1 complex, complex III, CIII), resulting in different assemblies (supercomplex SCI(1)III(2)IV(1) and megacomplex MCI(2)III(2)IV(2)). Found in a complex with TMEM177, COA6, COX18, COX20, SCO1 and SCO2. Interacts with TMEM177 in a COX20-dependent manner. Interacts with COX20. Interacts with COX16. Cu cation is required as a cofactor.

It localises to the mitochondrion inner membrane. It catalyses the reaction 4 Fe(II)-[cytochrome c] + O2 + 8 H(+)(in) = 4 Fe(III)-[cytochrome c] + 2 H2O + 4 H(+)(out). Its function is as follows. Component of the cytochrome c oxidase, the last enzyme in the mitochondrial electron transport chain which drives oxidative phosphorylation. The respiratory chain contains 3 multisubunit complexes succinate dehydrogenase (complex II, CII), ubiquinol-cytochrome c oxidoreductase (cytochrome b-c1 complex, complex III, CIII) and cytochrome c oxidase (complex IV, CIV), that cooperate to transfer electrons derived from NADH and succinate to molecular oxygen, creating an electrochemical gradient over the inner membrane that drives transmembrane transport and the ATP synthase. Cytochrome c oxidase is the component of the respiratory chain that catalyzes the reduction of oxygen to water. Electrons originating from reduced cytochrome c in the intermembrane space (IMS) are transferred via the dinuclear copper A center (CU(A)) of subunit 2 and heme A of subunit 1 to the active site in subunit 1, a binuclear center (BNC) formed by heme A3 and copper B (CU(B)). The BNC reduces molecular oxygen to 2 water molecules using 4 electrons from cytochrome c in the IMS and 4 protons from the mitochondrial matrix. The chain is Cytochrome c oxidase subunit 2 (MT-CO2) from Oryctolagus cuniculus (Rabbit).